Consider the following 475-residue polypeptide: Glutamyl-tRNA(Gln) amidotransferase subunit A (475 aa).

Catalysis depends on charge relay system residues K76 and S151. Residue S175 is the Acyl-ester intermediate of the active site.

Belongs to the amidase family. GatA subfamily. As to quaternary structure, heterotrimer of A, B and C subunits.

It catalyses the reaction L-glutamyl-tRNA(Gln) + L-glutamine + ATP + H2O = L-glutaminyl-tRNA(Gln) + L-glutamate + ADP + phosphate + H(+). Its function is as follows. Allows the formation of correctly charged Gln-tRNA(Gln) through the transamidation of misacylated Glu-tRNA(Gln) in organisms which lack glutaminyl-tRNA synthetase. The reaction takes place in the presence of glutamine and ATP through an activated gamma-phospho-Glu-tRNA(Gln). This Pelodictyon phaeoclathratiforme (strain DSM 5477 / BU-1) protein is Glutamyl-tRNA(Gln) amidotransferase subunit A.